We begin with the raw amino-acid sequence, 312 residues long: GDSL esterase/lipase At2g38180 (312 aa).

Positions 1 to 22 are cleaved as a signal peptide; it reads MVGPVRPQIVLFGSSIVQYSFT. Asn79 carries N-linked (GlcNAc...) asparagine glycosylation. Residues 285 to 312 are disordered; sequence EPPHPVSLCDHELTQNEQLEPPQPTARL.

The protein belongs to the 'GDSL' lipolytic enzyme family.

The protein resides in the secreted. The sequence is that of GDSL esterase/lipase At2g38180 from Arabidopsis thaliana (Mouse-ear cress).